We begin with the raw amino-acid sequence, 376 residues long: Chaperone protein DnaJ (376 aa).

The region spanning 5-70 (DFYDVLGVSK…EKKQNYDNFG (66 aa)) is the J domain. A CR-type zinc finger spans residues 137 to 215 (GKKQDIKFST…CNGQGNKQAS (79 aa)). Positions 150, 153, 167, 170, 189, 192, 203, and 206 each coordinate Zn(2+). CXXCXGXG motif repeat units lie at residues 150–157 (CNTCNGNG), 167–174 (CTVCGGNG), 189–196 (CPQCAGSG), and 203–210 (CTDCNGQG).

The protein belongs to the DnaJ family. Homodimer. Requires Zn(2+) as cofactor.

It is found in the cytoplasm. Participates actively in the response to hyperosmotic and heat shock by preventing the aggregation of stress-denatured proteins and by disaggregating proteins, also in an autonomous, DnaK-independent fashion. Unfolded proteins bind initially to DnaJ; upon interaction with the DnaJ-bound protein, DnaK hydrolyzes its bound ATP, resulting in the formation of a stable complex. GrpE releases ADP from DnaK; ATP binding to DnaK triggers the release of the substrate protein, thus completing the reaction cycle. Several rounds of ATP-dependent interactions between DnaJ, DnaK and GrpE are required for fully efficient folding. Also involved, together with DnaK and GrpE, in the DNA replication of plasmids through activation of initiation proteins. This is Chaperone protein DnaJ from Pelagibacter ubique (strain HTCC1062).